The sequence spans 288 residues: Probable pectinesterase 56 (288 aa).

A signal peptide spans Met1–Ala27. 2 N-linked (GlcNAc...) asparagine glycosylation sites follow: Asn55 and Asn95. Substrate-binding residues include Thr120 and Gln150. Asp173 functions as the Proton donor in the catalytic mechanism. The active-site Nucleophile is Asp194. The N-linked (GlcNAc...) asparagine glycan is linked to Asn242. Arg262 and Trp264 together coordinate substrate.

The protein belongs to the pectinesterase family.

The protein localises to the secreted. It localises to the cell wall. The enzyme catalyses [(1-&gt;4)-alpha-D-galacturonosyl methyl ester](n) + n H2O = [(1-&gt;4)-alpha-D-galacturonosyl](n) + n methanol + n H(+). It functions in the pathway glycan metabolism; pectin degradation; 2-dehydro-3-deoxy-D-gluconate from pectin: step 1/5. Acts in the modification of cell walls via demethylesterification of cell wall pectin. The protein is Probable pectinesterase 56 (PME56) of Arabidopsis thaliana (Mouse-ear cress).